The sequence spans 366 residues: Polyprenyl transferase ausN (366 aa).

The next 8 helical transmembrane spans lie at 97-117, 121-141, 164-184, 215-235, 239-259, 287-307, 308-328, and 346-366; these read VVGI…DLLL, LLLT…NDLI, LPTA…LFLF, LILV…GVEP, ILSS…IDLV, LAYS…LLGG, LRAP…WTFL, and SCLM…AVRV.

Belongs to the UbiA prenyltransferase family. Mg(2+) is required as a cofactor.

Its subcellular location is the membrane. The catalysed reaction is 3,5-dimethylorsellinate + (2E,6E)-farnesyl diphosphate = (3R)-3-farnesyl-6-hydroxy-2,3,5-trimethyl-4-oxocyclohexa-1,5-diene-1-carboxylate + diphosphate + H(+). The protein operates within secondary metabolite biosynthesis; terpenoid biosynthesis. Functionally, polyprenyl transferase; part of the gene cluster that mediates the biosynthesis of calidodehydroaustin, a fungal meroterpenoid. The first step of the pathway is the synthesis of 3,5-dimethylorsellinic acid by the polyketide synthase ausA. 3,5-dimethylorsellinic acid is then prenylated by the polyprenyl transferase ausN. Further epoxidation by the FAD-dependent monooxygenase ausM and cyclization by the probable terpene cyclase ausL lead to the formation of protoaustinoid A. Protoaustinoid A is then oxidized to spiro-lactone preaustinoid A3 by the combined action of the FAD-binding monooxygenases ausB and ausC, and the dioxygenase ausE. Acid-catalyzed keto-rearrangement and ring contraction of the tetraketide portion of preaustinoid A3 by ausJ lead to the formation of preaustinoid A4. The aldo-keto reductase ausK, with the help of ausH, is involved in the next step by transforming preaustinoid A4 into isoaustinone which is in turn hydroxylated by the P450 monooxygenase ausI to form austinolide. The cytochrome P450 monooxygenase ausG modifies austinolide to austinol. Austinol is further acetylated to austin by the O-acetyltransferase ausP, which spontaneously changes to dehydroaustin. The cytochrome P450 monooxygenase ausR then converts dehydroaustin is into 7-dehydrodehydroaustin. The hydroxylation catalyzed by ausR permits the O-acetyltransferase ausQ to add an additional acetyl group to the molecule, leading to the formation of acetoxydehydroaustin. The short chain dehydrogenase ausT catalyzes the reduction of the double bond present between carbon atoms 1 and 2 to convert 7-dehydrodehydroaustin into 1,2-dihydro-7-hydroxydehydroaustin. AusQ catalyzes not only an acetylation reaction but also the addition of the PKS ausV diketide product to 1,2-dihydro-7-hydroxydehydroaustin, forming precalidodehydroaustin. Finally, the iron/alpha-ketoglutarate-dependent dioxygenase converts precalidodehydroaustin into calidodehydroaustin. The chain is Polyprenyl transferase ausN from Aspergillus calidoustus.